The primary structure comprises 182 residues: RNA pyrophosphohydrolase (182 aa).

In terms of domain architecture, Nudix hydrolase spans 6–149 (GYRPNVGIIL…KRLVYEQALN (144 aa)). The Nudix box signature appears at 38–59 (GGIKRGETPEEAMFRELYEEVG). Positions 162 to 182 (PRHKKEQEPFSDVVDSVRSEE) are disordered.

Belongs to the Nudix hydrolase family. RppH subfamily. It depends on a divalent metal cation as a cofactor.

In terms of biological role, accelerates the degradation of transcripts by removing pyrophosphate from the 5'-end of triphosphorylated RNA, leading to a more labile monophosphorylated state that can stimulate subsequent ribonuclease cleavage. This chain is RNA pyrophosphohydrolase, found in Dechloromonas aromatica (strain RCB).